The sequence spans 470 residues: Adenosylhomocysteinase (470 aa).

The substrate site is built by T61, D136, and E196. 197–199 lines the NAD(+) pocket; sequence TTT. K226 and D230 together coordinate substrate. Residues N231, 260 to 265, E283, N318, 339 to 341, and N384 each bind NAD(+); these read GYGDVG and IGH.

The protein belongs to the adenosylhomocysteinase family. It depends on NAD(+) as a cofactor.

The protein localises to the cytoplasm. The catalysed reaction is S-adenosyl-L-homocysteine + H2O = L-homocysteine + adenosine. Its pathway is amino-acid biosynthesis; L-homocysteine biosynthesis; L-homocysteine from S-adenosyl-L-homocysteine: step 1/1. Its function is as follows. May play a key role in the regulation of the intracellular concentration of adenosylhomocysteine. The sequence is that of Adenosylhomocysteinase from Aromatoleum aromaticum (strain DSM 19018 / LMG 30748 / EbN1) (Azoarcus sp. (strain EbN1)).